A 1108-amino-acid polypeptide reads, in one-letter code: Probable arabinosyltransferase A (1108 aa).

13 helical membrane-spanning segments follow: residues 12 to 34 (IPRSVAAVAGIAGLLLCLAVPLL), 204 to 223 (IVMVLGTLAVLTAIVALAVL), 258 to 280 (VGLATWIADAAVLATLLLWHVVG), 334 to 356 (VWMRLPATLAGIGCWLIISHWVL), 368 to 387 (ANRVAVFTAGAVFVAAWLPF), 397 to 414 (IALGVLVTWMLVERAIAL), 421 to 443 (AVAVVVALLTATLAPQGLIAVAA), 463 to 482 (GLLAPLAVLAAALSLILVVV), 531 to 553 (FAVLVMLLCLFGMLVILLRRGHV), 582 to 604 (WAVQFGAFAGLAGALGALTAFAC), 616 to 638 (TLYVTALLFVLAWATSGINGWFY), 653 to 675 (IASHPVTSMFLTLSIITGLLAAW), and 696 to 718 (VLASTPLLVVATIMVVGEVASLT). The disordered stretch occupies residues 804 to 825 (PGLVNSDASPNKPNVAYSDSAG).

Belongs to the emb family.

The protein localises to the cell membrane. Arabinosyl transferase responsible for the polymerization of arabinose into the arabinan of arabinogalactan. The polypeptide is Probable arabinosyltransferase A (embA) (Mycobacterium avium).